Consider the following 236-residue polypeptide: Large ribosomal subunit protein uL1 (236 aa).

This sequence belongs to the universal ribosomal protein uL1 family. As to quaternary structure, part of the 50S ribosomal subunit.

Its function is as follows. Binds directly to 23S rRNA. The L1 stalk is quite mobile in the ribosome, and is involved in E site tRNA release. In terms of biological role, protein L1 is also a translational repressor protein, it controls the translation of the L11 operon by binding to its mRNA. This is Large ribosomal subunit protein uL1 from Sorangium cellulosum (strain So ce56) (Polyangium cellulosum (strain So ce56)).